Here is a 386-residue protein sequence, read N- to C-terminus: Na(+)/H(+) antiporter NhaA (386 aa).

The next 10 membrane-spanning stretches (helical) occupy residues 10 to 30 (EFSIPLLAGVLTALVWANVAP), 45 to 65 (LSFHFVTNDIFMAFFFAIAAV), 84 to 104 (LNPLLATAGGVVGPVGVYLAL), 116 to 136 (GWGIPTATDIAFAWLAARLIF), 142 to 162 (VIAFLLLLAIADDAIGLVIIA), 169 to 189 (VLPVAPPWLMLTAAGMLIAFI), 261 to 281 (IIVDFGLFMFGLANAGVGFSA), 287 to 307 (WLVFCALLFGKVTGIFVFALL), 323 to 343 (HLLVAGIIAGIGFTVALFVAG), and 358 to 378 (GAILSIAVFPVAMAAAKLLGI).

The protein belongs to the NhaA Na(+)/H(+) (TC 2.A.33) antiporter family.

It is found in the cell inner membrane. The catalysed reaction is Na(+)(in) + 2 H(+)(out) = Na(+)(out) + 2 H(+)(in). In terms of biological role, na(+)/H(+) antiporter that extrudes sodium in exchange for external protons. In Geotalea uraniireducens (strain Rf4) (Geobacter uraniireducens), this protein is Na(+)/H(+) antiporter NhaA.